The sequence spans 891 residues: Tubulin polyglutamylase TTLL6 (891 aa).

2 disordered regions span residues 1-25 (MGAL…SSPA) and 44-106 (SQAR…KRKK). A compositionally biased stretch (basic and acidic residues) spans 63–76 (SEEKGDSSKEDPKE). The segment covering 88–99 (GAQNGLQNAQQQ) has biased composition (low complexity). Residues 106–449 (KKRLVINLSS…ESCDKKKVLE (344 aa)) form the TTL domain. ATP contacts are provided by residues Lys223, 229-230 (QG), 251-254 (QLYI), and 264-266 (KFD). Position 229 (Gln229) interacts with a protein. Residue Arg290 participates in L-glutamate binding. Residue 312–313 (TN) participates in ATP binding. L-glutamate is bound by residues Tyr314, Ser315, and Lys332. The Mg(2+) site is built by Asp395, Glu408, and Asn410. Position 411 (His411) interacts with a protein. Residues 420–499 (RLDKEVKDGL…CGGFRLIYPS (80 aa)) are c-MTBD region. Residue Lys426 coordinates L-glutamate. Disordered stretches follow at residues 546 to 584 (QMKK…ATQA), 607 to 636 (GERK…LTSA), 687 to 711 (TTPE…TASS), and 800 to 820 (NNLS…DSSG). Over residues 687–699 (TTPESTTQLSISP) the composition is skewed to polar residues.

It belongs to the tubulin--tyrosine ligase family. In terms of assembly, found in a complex with CEP41. Mg(2+) serves as cofactor.

The protein localises to the cytoplasm. It localises to the cytoskeleton. Its subcellular location is the cilium axoneme. The protein resides in the cilium basal body. It catalyses the reaction L-glutamyl-[protein] + L-glutamate + ATP = gamma-L-glutamyl-L-glutamyl-[protein] + ADP + phosphate + H(+). It carries out the reaction (L-glutamyl)(n)-gamma-L-glutamyl-L-glutamyl-[protein] + L-glutamate + ATP = (L-glutamyl)(n+1)-gamma-L-glutamyl-L-glutamyl-[protein] + ADP + phosphate + H(+). Polyglutamylase which modifies both tubulin and non-tubulin proteins, generating alpha-linked polyglutamate side chains on the gamma-carboxyl group of specific glutamate residues of target proteins. Preferentially mediates ATP-dependent long polyglutamate chain elongation over the initiation step of the polyglutamylation reaction. Preferentially modifies the alpha-tubulin tail over a beta-tail. Promotes tubulin polyglutamylation which stimulates spastin/SPAST-mediated microtubule severing, thereby regulating microtubule functions. Mediates microtubule polyglutamylation in primary cilia axoneme, which is important for ciliary structural formation and motility. Mediates microtubule polyglutamylation in motile cilia, necessary for the regulation of ciliary coordinated beating. Polyglutamylates non-tubulin protein nucleotidyltransferase CGAS, leading to CGAS DNA-binding inhibition, thereby preventing antiviral defense response. This Homo sapiens (Human) protein is Tubulin polyglutamylase TTLL6.